The primary structure comprises 136 residues: Histone H3 (136 aa).

The disordered stretch occupies residues 1 to 43 (MARTKQTARKSTGGKAPRKQLATKAARKSAPATGGVKKPHRYR). An N6-methylated lysine modification is found at K5. K10 carries the N6-acetyllysine; alternate modification. K10 carries the N6-methylated lysine; alternate modification. S11 bears the Phosphoserine mark. Residues K15 and K24 each carry the N6-acetyllysine modification. Residues K28, K37, and K80 each carry the N6-methylated lysine modification.

Belongs to the histone H3 family. The nucleosome is a histone octamer containing two molecules each of H2A, H2B, H3 and H4 assembled in one H3-H4 heterotetramer and two H2A-H2B heterodimers. The octamer wraps approximately 147 bp of DNA. Acetylation is generally linked to gene activation. Post-translationally, methylation at Lys-5 is linked to gene activation. Methylation at Lys-10 is linked to gene repression.

It localises to the nucleus. The protein localises to the chromosome. Its function is as follows. Core component of nucleosome. Nucleosomes wrap and compact DNA into chromatin, limiting DNA accessibility to the cellular machineries which require DNA as a template. Histones thereby play a central role in transcription regulation, DNA repair, DNA replication and chromosomal stability. DNA accessibility is regulated via a complex set of post-translational modifications of histones, also called histone code, and nucleosome remodeling. This chain is Histone H3, found in Platynereis dumerilii (Dumeril's clam worm).